Here is a 334-residue protein sequence, read N- to C-terminus: Glyceraldehyde-3-phosphate dehydrogenase (334 aa).

NAD(+)-binding positions include 12-13 and Gly-111; that span reads TI. D-glyceraldehyde 3-phosphate is bound at residue 140-142; that stretch reads SCN. The Nucleophile role is filled by Cys-141. NAD(+) is bound at residue Arg-167. 192-193 serves as a coordination point for D-glyceraldehyde 3-phosphate; it reads HG. Gln-298 contacts NAD(+).

This sequence belongs to the glyceraldehyde-3-phosphate dehydrogenase family. In terms of assembly, homotetramer.

The protein resides in the cytoplasm. It catalyses the reaction D-glyceraldehyde 3-phosphate + phosphate + NADP(+) = (2R)-3-phospho-glyceroyl phosphate + NADPH + H(+). The enzyme catalyses D-glyceraldehyde 3-phosphate + phosphate + NAD(+) = (2R)-3-phospho-glyceroyl phosphate + NADH + H(+). The protein operates within carbohydrate degradation; glycolysis; pyruvate from D-glyceraldehyde 3-phosphate: step 1/5. The polypeptide is Glyceraldehyde-3-phosphate dehydrogenase (Thermococcus sibiricus (strain DSM 12597 / MM 739)).